The following is a 396-amino-acid chain: Elongation factor Tu (396 aa).

In terms of domain architecture, tr-type G spans 10–205; that stretch reads KPHVNIGTIG…AVDESIPAPV (196 aa). The G1 stretch occupies residues 19–26; sequence GHVDHGKT. 19-26 contacts GTP; the sequence is GHVDHGKT. Position 26 (threonine 26) interacts with Mg(2+). The interval 62–66 is G2; it reads GITIN. The segment at 83–86 is G3; that stretch reads DAPG. Residues 83–87 and 138–141 each bind GTP; these read DAPGH and NKSD. The G4 stretch occupies residues 138–141; that stretch reads NKSD. The tract at residues 175 to 177 is G5; the sequence is SAL.

The protein belongs to the TRAFAC class translation factor GTPase superfamily. Classic translation factor GTPase family. EF-Tu/EF-1A subfamily. In terms of assembly, monomer.

It is found in the cytoplasm. The catalysed reaction is GTP + H2O = GDP + phosphate + H(+). Its function is as follows. GTP hydrolase that promotes the GTP-dependent binding of aminoacyl-tRNA to the A-site of ribosomes during protein biosynthesis. The sequence is that of Elongation factor Tu from Mycobacterium leprae (strain Br4923).